We begin with the raw amino-acid sequence, 72 residues long: DNA-directed RNA polymerase subunit omega (72 aa).

The protein belongs to the RNA polymerase subunit omega family. As to quaternary structure, the RNAP catalytic core consists of 2 alpha, 1 beta, 1 beta' and 1 omega subunit. When a sigma factor is associated with the core the holoenzyme is formed, which can initiate transcription.

The enzyme catalyses RNA(n) + a ribonucleoside 5'-triphosphate = RNA(n+1) + diphosphate. In terms of biological role, promotes RNA polymerase assembly. Latches the N- and C-terminal regions of the beta' subunit thereby facilitating its interaction with the beta and alpha subunits. In Clostridium tetani (strain Massachusetts / E88), this protein is DNA-directed RNA polymerase subunit omega (rpoZ).